The following is a 552-amino-acid chain: Hyaluronan synthase 2 (552 aa).

At 1–11 (MHCERFLCILR) the chain is on the cytoplasmic side. A helical transmembrane segment spans residues 12-32 (IIGTTLFGVSLLLGITAAYIV). Residues 33–45 (GYQFIQTDNYYFS) lie on the Extracellular side of the membrane. A helical transmembrane segment spans residues 46–66 (FGLYGAFLASHLIIQSLFAFL). At 67–374 (EHRKMKKSLE…NAMWFHKHHL (308 aa)) the chain is on the cytoplasmic side. T110 carries the post-translational modification Phosphothreonine. A Glycyl lysine isopeptide (Lys-Gly) (interchain with G-Cter in ubiquitin) cross-link involves residue K190. Residue S221 is glycosylated (O-linked (GlcNAc) serine). A Phosphothreonine modification is found at T328. The helical transmembrane segment at 375 to 395 (WMTYEAVITGFFPFFLIATVI) threads the bilayer. Topologically, residues 396 to 402 (QLFYRGK) are extracellular. Residues 403 to 423 (IWNTLLFLLTVQLVGLIKSSF) form a helical membrane-spanning segment. Residues 424 to 429 (ASCLRG) lie on the Cytoplasmic side of the membrane. Residues 430-450 (NIVMVFMSLYSVLYMSSLLPA) form a helical membrane-spanning segment. Over 451-475 (KMFAIATINKAGWGTSGRKTIVVNF) the chain is Extracellular. The chain crosses the membrane as a helical span at residues 476–496 (IGLIPVSVWFTILLGGVIFTI). At 497-510 (YKESKKPFSESKQT) the chain is on the cytoplasmic side. The chain crosses the membrane as a helical span at residues 511–531 (VLIVGTLLYACYWVMLLTLYV). Topologically, residues 532–552 (VLINKCGRRKKGQQYDMVLDV) are extracellular.

This sequence belongs to the NodC/HAS family. Homodimer; dimerization promotes enzymatic activity. Forms heterodimer with HAS3. Forms heterodimer with HAS1. Requires Mg(2+) as cofactor. Phosphorylation at Thr-328 is essential for hyaluronan synthase activity. Post-translationally, O-GlcNAcylation at Ser-221 increases the stability of HAS2 and plasma membrane localization. In terms of processing, ubiquitination at Lys-190; this ubiquitination is essential for hyaluronan synthase activity and homo- or hetero-oligomerization. Can also be poly-ubiquitinated. Deubiquitinated by USP17 and USP4. USP17 efficiently removes 'Lys-63'- and 'Lys-48'-linked polyubiquitin chains, whereas USP4 preferentially removes monoubiquitination and, partially, both 'Lys-63'- and 'Lys-48'-linked polyubiquitin chain. In terms of tissue distribution, expressed in corneal endothelial cells.

It is found in the cell membrane. It localises to the endoplasmic reticulum membrane. Its subcellular location is the vesicle. The protein localises to the golgi apparatus membrane. The protein resides in the lysosome. The enzyme catalyses [hyaluronan](n) + UDP-N-acetyl-alpha-D-glucosamine = N-acetyl-beta-D-glucosaminyl-(1-&gt;4)-[hyaluronan](n) + UDP + H(+). The catalysed reaction is N-acetyl-beta-D-glucosaminyl-(1-&gt;4)-[hyaluronan](n) + UDP-alpha-D-glucuronate = [hyaluronan](n+1) + UDP + H(+). Its pathway is glycan biosynthesis; hyaluronan biosynthesis. In terms of biological role, catalyzes the addition of GlcNAc or GlcUA monosaccharides to the nascent hyaluronan polymer. Therefore, it is essential to hyaluronan synthesis a major component of most extracellular matrices that has a structural role in tissues architectures and regulates cell adhesion, migration and differentiation. This is one of three isoenzymes responsible for cellular hyaluronan synthesis and it is particularly responsible for the synthesis of high molecular mass hyaluronan. The polypeptide is Hyaluronan synthase 2 (HAS2) (Bos taurus (Bovine)).